The chain runs to 71 residues: Translation initiation factor IF-1 (71 aa).

Residues 1–71 form the S1-like domain; that stretch reads MAKDAIKLRA…TKGRITYRHK (71 aa).

It belongs to the IF-1 family. Component of the 30S ribosomal translation pre-initiation complex which assembles on the 30S ribosome in the order IF-2 and IF-3, IF-1 and N-formylmethionyl-tRNA(fMet); mRNA recruitment can occur at any time during PIC assembly.

It is found in the cytoplasm. One of the essential components for the initiation of protein synthesis. Stabilizes the binding of IF-2 and IF-3 on the 30S subunit to which N-formylmethionyl-tRNA(fMet) subsequently binds. Helps modulate mRNA selection, yielding the 30S pre-initiation complex (PIC). Upon addition of the 50S ribosomal subunit IF-1, IF-2 and IF-3 are released leaving the mature 70S translation initiation complex. The polypeptide is Translation initiation factor IF-1 (Mycoplasmopsis synoviae (strain 53) (Mycoplasma synoviae)).